Reading from the N-terminus, the 615-residue chain is Alpha-1,3-galactosidase B (615 aa).

The N-terminal stretch at 1-23 is a signal peptide; that stretch reads MRTFLSLKTCLLSALLLCVNSIA. PbH1 repeat units follow at residues 282 to 313, 423 to 445, 446 to 467, 478 to 500, 520 to 541, and 543 to 573; these read SKNI…HFMG, TPDA…LVST, PGKV…LIAG, VKDV…YQFC, HRNI…LFAR, and VNGL…TLEA.

It belongs to the glycosyl hydrolase 110 family. B subfamily.

It catalyses the reaction Hydrolysis of terminal, non-reducing branched (1-&gt;3)-alpha-D-galactosidic residues, producing free D-galactose.. It carries out the reaction Hydrolysis of terminal, non-reducing linear (1-&gt;3)-alpha-D-galactosidic residues, producing free D-galactose.. The catalysed reaction is Hydrolysis of terminal, non-reducing alpha-D-galactose residues in alpha-D-galactosides, including galactose oligosaccharides, galactomannans and galactolipids.. Alpha-galactosidase. Removes both branched alpha-1,3-linked galactose residues of blood group B antigens and linear alpha-1,3-linked galactose structures. The protein is Alpha-1,3-galactosidase B (glaB) of Bacteroides thetaiotaomicron (strain ATCC 29148 / DSM 2079 / JCM 5827 / CCUG 10774 / NCTC 10582 / VPI-5482 / E50).